A 503-amino-acid polypeptide reads, in one-letter code: MDDIFNFELPLHDRIKAIVKFGDETTIKRLISLLTISNSSIIKNTLYHLCKFCSDISCVLRLEIALALIDYEKEETEPSEIIGFEALDYVCFSMHKSKEIPFSCKLNAYLILNSGLPNLKRVYLYLYDMLTDSSTTFQFKYKTVKFLVSEREENNITSLMVEYCISVLLSNFHDSSYPKINNETYEDYLQIFILTCQLSLSYVPKLKCSCIAENKLLEICKNQNLSVNIRADASDMLLSYGSSENKEEAKIILDSLSFDNHTIKTIYNNKENVHTSTINKTAINTITIIIEDVNKMFQREDIWILTENILQNLIEKYPPNFKPQIKSQIDNAIKAYNRIMYLDNALYTAYNFNLKNIMNYVWTFINNSNKVSNKVELEKRLIEEMREMNNTCSSGYLTRFANIFSGFLENGGVFIGWDEQILSIFYGKVNSAITSSLNKDLILENLIETENENDKQEFQKLLRTILPNIIESIKIEFKDHISESDIDLYIRRALSVFEGHEFI.

Residues 437–465 (LNKDLILENLIETENENDKQEFQKLLRTI) adopt a coiled-coil conformation.

Belongs to the IIV-6 467R family.

This is an uncharacterized protein from Invertebrate iridescent virus 6 (IIV-6).